Reading from the N-terminus, the 266-residue chain is 3-methyl-2-oxobutanoate hydroxymethyltransferase (266 aa).

Mg(2+) contacts are provided by aspartate 45 and aspartate 84. Residues 45–46 (DS), aspartate 84, and lysine 112 contribute to the 3-methyl-2-oxobutanoate site. Mg(2+) is bound at residue glutamate 114. Residue glutamate 181 is the Proton acceptor of the active site.

This sequence belongs to the PanB family. As to quaternary structure, homodecamer; pentamer of dimers. The cofactor is Mg(2+).

The protein resides in the cytoplasm. The enzyme catalyses 3-methyl-2-oxobutanoate + (6R)-5,10-methylene-5,6,7,8-tetrahydrofolate + H2O = 2-dehydropantoate + (6S)-5,6,7,8-tetrahydrofolate. Its pathway is cofactor biosynthesis; (R)-pantothenate biosynthesis; (R)-pantoate from 3-methyl-2-oxobutanoate: step 1/2. Catalyzes the reversible reaction in which hydroxymethyl group from 5,10-methylenetetrahydrofolate is transferred onto alpha-ketoisovalerate to form ketopantoate. This is 3-methyl-2-oxobutanoate hydroxymethyltransferase from Pseudomonas fluorescens (strain Pf0-1).